Consider the following 457-residue polypeptide: MPHNSIRSGHGGLNQLGGAFVNGRPLPEVVRQRIVDLAHQGVRPCDISRQLRVSHGCVSKILGRYYETGSIRPGVIGGSKPKVATPKVVEKIGDYKRQNPTMFAWEIRDRLLAEGVCDNDTVPSVSSINRIIRTKVQQPFNLPMDSCVATKSLSPGHTLIPSSAVTPPESPQSDSLGSTYSINGLLGIAQPGSDNKRKMDDSDQDSCRLSIDSQSSSSGPRKHLRTDTFGQHHLEPLECPFERQHYPEAYASPSHTKGEQGLYPLPLLNSTLDDGKATLTPSNTPLGRNLSTHQTYPVVADPHSPYAIKQETPELSSSSSTPSSLSSSAFLDLQQVGSGGPAGASVPPFNAFSHAASVYGQFTGQALLSGREMVGPTLPGYPPHIPTSGQGSYASSAIAGMVAGSEYSGNAYSHTPYASYSEAWRFPNSSLLSSPYYYSSTTRPSAPPTSATAFDHL.

The segment at residues 9–135 (GHGGLNQLGG…SSINRIIRTK (127 aa)) is a DNA-binding region (paired). Positions 12 to 68 (GLNQLGGAFVNGRPLPEVVRQRIVDLAHQGVRPCDISRQLRVSHGCVSKILGRYYET) are PAI subdomain. Residues 87-135 (KVVEKIGDYKRQNPTMFAWEIRDRLLAEGVCDNDTVPSVSSINRIIRTK) are RED subdomain. Residues 159-182 (LIPSSAVTPPESPQSDSLGSTYSI) are compositionally biased toward polar residues. The segment at 159-226 (LIPSSAVTPP…SSGPRKHLRT (68 aa)) is disordered. Residue Ser304 is modified to Phosphoserine.

Interacts with WWTR1.

The protein resides in the nucleus. Functionally, thought to encode a transcription factor. It may have a role in kidney cell differentiation. May play a regulatory role in mammalian development. This Rattus norvegicus (Rat) protein is Paired box protein Pax-8 (Pax8).